The chain runs to 243 residues: Small ribosomal subunit protein uS3 (243 aa).

Residues 39-107 form the KH type-2 domain; that stretch reads MRKFVMSELK…ETHLNIVEVR (69 aa). The tract at residues 214–243 is disordered; that stretch reads ASERRAMEGDAQGPASRDRDRDRDRRRDNA. The segment covering 229-243 has biased composition (basic and acidic residues); sequence SRDRDRDRDRRRDNA.

Belongs to the universal ribosomal protein uS3 family. Part of the 30S ribosomal subunit. Forms a tight complex with proteins S10 and S14.

Its function is as follows. Binds the lower part of the 30S subunit head. Binds mRNA in the 70S ribosome, positioning it for translation. The sequence is that of Small ribosomal subunit protein uS3 from Rhizobium leguminosarum bv. trifolii (strain WSM2304).